Reading from the N-terminus, the 817-residue chain is Lon protease (817 aa).

A Lon N-terminal domain is found at 22 to 216 (VPIMPLSDGV…KVTRQLNHQL (195 aa)). 368-375 (GPPGTGKT) contributes to the ATP binding site. A Lon proteolytic domain is found at 604 to 785 (ALTPGVVMGL…GDVLELALNG (182 aa)). Active-site residues include S691 and K734. The segment at 784–817 (NGNGATKKKKKTPAKSKKSTKPAAKKTAARKSRK) is disordered. A compositionally biased stretch (basic residues) spans 789–817 (TKKKKKTPAKSKKSTKPAAKKTAARKSRK).

This sequence belongs to the peptidase S16 family. Homohexamer. Organized in a ring with a central cavity.

It is found in the cytoplasm. The enzyme catalyses Hydrolysis of proteins in presence of ATP.. Functionally, ATP-dependent serine protease that mediates the selective degradation of mutant and abnormal proteins as well as certain short-lived regulatory proteins. Required for cellular homeostasis and for survival from DNA damage and developmental changes induced by stress. Degrades polypeptides processively to yield small peptide fragments that are 5 to 10 amino acids long. Binds to DNA in a double-stranded, site-specific manner. The chain is Lon protease from Desulfosudis oleivorans (strain DSM 6200 / JCM 39069 / Hxd3) (Desulfococcus oleovorans).